We begin with the raw amino-acid sequence, 628 residues long: MPHPDGDLDRRIELLTAQIIAARKAYYQENTSLMSDVEYDALEHELKDAEHAKGFSDRNSPSLTVGIAAQLNLFEPVKHIEPMLSLDNVFSLDQLHSWYEKTKKICPEGDQCTFVCELKIDGVGVSLRYANGYLISAATRGDGAIGEDITQNMLYVPSIPPRIALPGIFEIRGEAFIKRDEFDRINQLSLERSKQFANPRNFVSGCIRTKTPNMRYLESISFYAHGFTQVYGYTSGGMNLHSDITASGGVKTEIEHGMFSAYSRLSECKIPVNSYNRLCTNFSEIESYIENIRLNRQCVPYAIDGIVVKIDSLQKQALLGSTTKAPRWAVAYKFPSESTVTRLLDIEVSVGRTGRVTPYAVLQPIQLDGSEVSRATLHNQKVIGDKDLLIGDYVRIRKAGDIVPEVLCALPEKRDGSEVLFKMPSLCPSCGAELMPSKLGDIDLRCPNMQSCLVQLAGRLEYIGSRGVLDIAYLAEENAYALSHLRKFGKSAEVQLFKITIDDLVALEFMYKGNMRSPFRKKGDSFPGFEEPTKSAQDMVDSIERAKRSPLWKFLLALNIRHIGPASAKALADHFGSIESIINAKIDELLKVRSLGETIAISVHDWFRDPWRVELVNTWRSDGALFGD.

NAD(+) contacts are provided by residues 36–40 (DVEYD), 85–86 (SL), and Glu-117. Lys-119 functions as the N6-AMP-lysine intermediate in the catalytic mechanism. NAD(+) is bound by residues Arg-140, Glu-174, Lys-309, and Lys-333. 4 residues coordinate Zn(2+): Cys-427, Cys-430, Cys-446, and Cys-452.

Belongs to the NAD-dependent DNA ligase family. LigA subfamily. The cofactor is Mg(2+). It depends on Mn(2+) as a cofactor.

The enzyme catalyses NAD(+) + (deoxyribonucleotide)n-3'-hydroxyl + 5'-phospho-(deoxyribonucleotide)m = (deoxyribonucleotide)n+m + AMP + beta-nicotinamide D-nucleotide.. Functionally, DNA ligase that catalyzes the formation of phosphodiester linkages between 5'-phosphoryl and 3'-hydroxyl groups in double-stranded DNA using NAD as a coenzyme and as the energy source for the reaction. It is essential for DNA replication and repair of damaged DNA. This chain is DNA ligase, found in Tropheryma whipplei (strain TW08/27) (Whipple's bacillus).